The primary structure comprises 236 residues: MKGGDKMKKLILLMLLLPISLIGCTDEESSVTVGHTTVYYTNVPDAKAEVLAGYLQEEFGFTSDTDILLSMSGNEYEVRIPSSYSSPSEVEESFKVYFALLASRVSEEVFFGSPVKLVLVTHQNDELFAVKNQYSFEKAGRVFVYFKGVDREQAFNLANYLESLVGENYDWDVIFEQSEGVYHVVPFVGINDASELTPEMENSYQSMATELEDVLGGDVVVHLVNFEGYEVAAFEG.

Residues 1–29 (MKGGDKMKKLILLMLLLPISLIGCTDEES) form the signal peptide.

This is an uncharacterized protein from Archaeoglobus fulgidus (strain ATCC 49558 / DSM 4304 / JCM 9628 / NBRC 100126 / VC-16).